Consider the following 150-residue polypeptide: Arginine repressor (150 aa).

Belongs to the ArgR family.

Its subcellular location is the cytoplasm. Its pathway is amino-acid biosynthesis; L-arginine biosynthesis [regulation]. Functionally, regulates arginine biosynthesis genes. The polypeptide is Arginine repressor (Staphylococcus epidermidis (strain ATCC 35984 / DSM 28319 / BCRC 17069 / CCUG 31568 / BM 3577 / RP62A)).